We begin with the raw amino-acid sequence, 167 residues long: Small ribosomal subunit protein uS3m (167 aa).

Residues 1–35 (MAWSASVRGLGQRVLACSRELPGAWRTLHTSAVCA) constitute a mitochondrion transit peptide.

The protein belongs to the universal ribosomal protein uS3 family. Component of the mitochondrial ribosome small subunit (28S) which comprises a 12S rRNA and about 30 distinct proteins.

The protein resides in the mitochondrion. In Mus musculus (Mouse), this protein is Small ribosomal subunit protein uS3m (Mrps24).